Reading from the N-terminus, the 343-residue chain is Ribosome production factor 1 (343 aa).

Basic and acidic residues-rich tracts occupy residues 1-10 (MAEKKGPEAK) and 82-91 (EREALGDKAP). Disordered stretches follow at residues 1-51 (MAEK…LSEI) and 77-97 (KKRKKEREALGDKAPPKPVPK). The Brix domain maps to 136-319 (PKILITTSDR…LRSLQKGTFD (184 aa)). The interval 297 to 314 (VGIQELGPRFTLKLRSLQ) is RNA-binding.

Its subcellular location is the nucleus. The protein localises to the nucleolus. May be required for ribosome biogenesis. This Xenopus laevis (African clawed frog) protein is Ribosome production factor 1 (rpf1).